The chain runs to 132 residues: Fluoride-specific ion channel FluC (132 aa).

Helical transmembrane passes span L5–V25, T32–A52, F70–L90, and V105–G125. Residues G77 and T80 each contribute to the Na(+) site.

Belongs to the fluoride channel Fluc/FEX (TC 1.A.43) family.

The protein resides in the cell inner membrane. The catalysed reaction is fluoride(in) = fluoride(out). With respect to regulation, na(+) is not transported, but it plays an essential structural role and its presence is essential for fluoride channel function. Functionally, fluoride-specific ion channel. Important for reducing fluoride concentration in the cell, thus reducing its toxicity. This chain is Fluoride-specific ion channel FluC, found in Opitutus terrae (strain DSM 11246 / JCM 15787 / PB90-1).